The chain runs to 488 residues: UDP-N-acetylmuramate--L-alanine ligase (488 aa).

127-133 contributes to the ATP binding site; it reads GTHGKTT.

It belongs to the MurCDEF family.

The protein resides in the cytoplasm. It catalyses the reaction UDP-N-acetyl-alpha-D-muramate + L-alanine + ATP = UDP-N-acetyl-alpha-D-muramoyl-L-alanine + ADP + phosphate + H(+). It participates in cell wall biogenesis; peptidoglycan biosynthesis. Cell wall formation. This Shewanella baltica (strain OS223) protein is UDP-N-acetylmuramate--L-alanine ligase.